The following is a 215-amino-acid chain: Histidine biosynthesis bifunctional protein HisIE (215 aa).

The tract at residues 1–114 (MLKKHDLLNL…FISNKYNINF (114 aa)) is phosphoribosyl-AMP cyclohydrolase. Positions 115-215 (LFKLEEIIEE…LNTNSEKLLK (101 aa)) are phosphoribosyl-ATP pyrophosphohydrolase.

The protein in the N-terminal section; belongs to the PRA-CH family. In the C-terminal section; belongs to the PRA-PH family.

It localises to the cytoplasm. It carries out the reaction 1-(5-phospho-beta-D-ribosyl)-ATP + H2O = 1-(5-phospho-beta-D-ribosyl)-5'-AMP + diphosphate + H(+). The catalysed reaction is 1-(5-phospho-beta-D-ribosyl)-5'-AMP + H2O = 1-(5-phospho-beta-D-ribosyl)-5-[(5-phospho-beta-D-ribosylamino)methylideneamino]imidazole-4-carboxamide. The protein operates within amino-acid biosynthesis; L-histidine biosynthesis; L-histidine from 5-phospho-alpha-D-ribose 1-diphosphate: step 2/9. It functions in the pathway amino-acid biosynthesis; L-histidine biosynthesis; L-histidine from 5-phospho-alpha-D-ribose 1-diphosphate: step 3/9. This chain is Histidine biosynthesis bifunctional protein HisIE (hisI), found in Buchnera aphidicola subsp. Acyrthosiphon pisum (strain APS) (Acyrthosiphon pisum symbiotic bacterium).